A 297-amino-acid polypeptide reads, in one-letter code: Halorhodopsin (297 aa).

Residues 1-31 (MRSRTYHDQSVCGPYGSQRTDCDRDTDAGSD) are disordered. Over 1-45 (MRSRTYHDQSVCGPYGSQRTDCDRDTDAGSDTDVHGAQVATQIRT) the chain is Extracellular. Residues 46 to 71 (DTLLHSSLWVNIALAGLSILVFLYMA) traverse the membrane as a helical segment. At 72–77 (RTVRAN) the chain is on the cytoplasmic side. The chain crosses the membrane as a helical span at residues 78–101 (RARLIVGATLMIPLVSLSSYLGLV). The Extracellular segment spans residues 102 to 125 (TGLTAGPIEMPAAHALAGEDVLSQ). Residues 126–147 (WGRYLTWTLSTPMILLALGWLA) form a helical membrane-spanning segment. At 148–150 (EVD) the chain is on the cytoplasmic side. The helical transmembrane segment at 151–174 (TADLFVVIAADIGMCLTGLAAALT) threads the bilayer. The Extracellular portion of the chain corresponds to 175-177 (TSS). The helical transmembrane segment at 178 to 200 (YAFRWAFYLVSTAFFVVVLYALL) threads the bilayer. Over 201–212 (AKWPTNAEAAGT) the chain is Cytoplasmic. The chain crosses the membrane as a helical span at residues 213 to 236 (GDIFGTLRWLTVILWLGYPILWAL). Residues 237–246 (GVEGFALVDS) lie on the Extracellular side of the membrane. Residues 247 to 275 (VGLTSWGYSLLDIGAKYLFAALLLRWVAN) traverse the membrane as a helical segment. The residue at position 262 (Lys-262) is an N6-(retinylidene)lysine. Topologically, residues 276–297 (NERTIAVGQRSGRGAIGDPVED) are cytoplasmic.

Belongs to the archaeal/bacterial/fungal opsin family.

It is found in the cell membrane. Its function is as follows. Light-driven chloride pump. This chain is Halorhodopsin (hop), found in Haloterrigena sp. (strain arg-4).